Reading from the N-terminus, the 692-residue chain is Methionine--tRNA ligase (692 aa).

A 'HIGH' region motif is present at residues 12–22 (PYANGPLHLGH). Positions 143, 146, 156, and 159 each coordinate Zn(2+). The 'KMSKS' region motif lies at 330–334 (KMSKS). K333 contributes to the ATP binding site. Residues 554 to 563 (AAAAPAAKPA) show a composition bias toward low complexity. Positions 554–575 (AAAAPAAKPAAPAPAPAPAKDE) are disordered. A tRNA-binding domain is found at 589-692 (DFAKLDLRIG…SGAQPGMPVR (104 aa)).

Belongs to the class-I aminoacyl-tRNA synthetase family. MetG type 1 subfamily. As to quaternary structure, homodimer. Zn(2+) is required as a cofactor.

The protein resides in the cytoplasm. The catalysed reaction is tRNA(Met) + L-methionine + ATP = L-methionyl-tRNA(Met) + AMP + diphosphate. In terms of biological role, is required not only for elongation of protein synthesis but also for the initiation of all mRNA translation through initiator tRNA(fMet) aminoacylation. The protein is Methionine--tRNA ligase of Stenotrophomonas maltophilia (strain K279a).